Here is a 202-residue protein sequence, read N- to C-terminus: Small ribosomal subunit protein uS4c (202 aa).

An S4 RNA-binding domain is found at 90–154; the sequence is MRLDNILFRL…SQSIITKNLN (65 aa).

The protein belongs to the universal ribosomal protein uS4 family. As to quaternary structure, part of the 30S ribosomal subunit. Contacts protein S5. The interaction surface between S4 and S5 is involved in control of translational fidelity.

It localises to the plastid. The protein localises to the chloroplast. In terms of biological role, one of the primary rRNA binding proteins, it binds directly to 16S rRNA where it nucleates assembly of the body of the 30S subunit. Functionally, with S5 and S12 plays an important role in translational accuracy. In Monoclea forsteri (Liverwort), this protein is Small ribosomal subunit protein uS4c (rps4).